The chain runs to 255 residues: Leucyl/phenylalanyl-tRNA--protein transferase (255 aa).

This sequence belongs to the L/F-transferase family.

Its subcellular location is the cytoplasm. The catalysed reaction is N-terminal L-lysyl-[protein] + L-leucyl-tRNA(Leu) = N-terminal L-leucyl-L-lysyl-[protein] + tRNA(Leu) + H(+). The enzyme catalyses N-terminal L-arginyl-[protein] + L-leucyl-tRNA(Leu) = N-terminal L-leucyl-L-arginyl-[protein] + tRNA(Leu) + H(+). It carries out the reaction L-phenylalanyl-tRNA(Phe) + an N-terminal L-alpha-aminoacyl-[protein] = an N-terminal L-phenylalanyl-L-alpha-aminoacyl-[protein] + tRNA(Phe). Functions in the N-end rule pathway of protein degradation where it conjugates Leu, Phe and, less efficiently, Met from aminoacyl-tRNAs to the N-termini of proteins containing an N-terminal arginine or lysine. The chain is Leucyl/phenylalanyl-tRNA--protein transferase from Burkholderia pseudomallei (strain 668).